Reading from the N-terminus, the 293-residue chain is Bifunctional protein FolD (293 aa).

NADP(+) contacts are provided by residues 164-166 (GRS), Ser-193, and Thr-234.

This sequence belongs to the tetrahydrofolate dehydrogenase/cyclohydrolase family. As to quaternary structure, homodimer.

It catalyses the reaction (6R)-5,10-methylene-5,6,7,8-tetrahydrofolate + NADP(+) = (6R)-5,10-methenyltetrahydrofolate + NADPH. It carries out the reaction (6R)-5,10-methenyltetrahydrofolate + H2O = (6R)-10-formyltetrahydrofolate + H(+). Its pathway is one-carbon metabolism; tetrahydrofolate interconversion. Its function is as follows. Catalyzes the oxidation of 5,10-methylenetetrahydrofolate to 5,10-methenyltetrahydrofolate and then the hydrolysis of 5,10-methenyltetrahydrofolate to 10-formyltetrahydrofolate. The sequence is that of Bifunctional protein FolD from Bacteroides fragilis (strain ATCC 25285 / DSM 2151 / CCUG 4856 / JCM 11019 / LMG 10263 / NCTC 9343 / Onslow / VPI 2553 / EN-2).